A 317-amino-acid polypeptide reads, in one-letter code: Zinc finger protein 771 (317 aa).

Lys-33 is covalently cross-linked (Glycyl lysine isopeptide (Lys-Gly) (interchain with G-Cter in SUMO2)). 8 C2H2-type zinc fingers span residues 63 to 85, 91 to 113, 119 to 141, 147 to 169, 175 to 197, 203 to 225, 231 to 253, and 259 to 281; these read HACP…ARTH, FACT…GRTH, YQCP…RRRH, YACA…LRVH, YACP…RRTH, YACA…RRVH, HRCA…ARTH, and YPCT…RRAH.

It belongs to the krueppel C2H2-type zinc-finger protein family.

It localises to the nucleus. Its function is as follows. May be involved in transcriptional regulation. The protein is Zinc finger protein 771 (Znf771) of Mus musculus (Mouse).